A 248-amino-acid polypeptide reads, in one-letter code: 1-(5-phosphoribosyl)-5-[(5-phosphoribosylamino)methylideneamino] imidazole-4-carboxamide isomerase (248 aa).

The active-site Proton acceptor is D8. The active-site Proton donor is the D131.

The protein belongs to the HisA/HisF family.

It localises to the cytoplasm. It carries out the reaction 1-(5-phospho-beta-D-ribosyl)-5-[(5-phospho-beta-D-ribosylamino)methylideneamino]imidazole-4-carboxamide = 5-[(5-phospho-1-deoxy-D-ribulos-1-ylimino)methylamino]-1-(5-phospho-beta-D-ribosyl)imidazole-4-carboxamide. It functions in the pathway amino-acid biosynthesis; L-histidine biosynthesis; L-histidine from 5-phospho-alpha-D-ribose 1-diphosphate: step 4/9. The polypeptide is 1-(5-phosphoribosyl)-5-[(5-phosphoribosylamino)methylideneamino] imidazole-4-carboxamide isomerase (Nitrosomonas eutropha (strain DSM 101675 / C91 / Nm57)).